Consider the following 205-residue polypeptide: MSRYTGSIFRKSRRLGFSILETGKEFAKGKQRRYAPGLHGLRRSKPSDYGVHLREKQKVRFMYGLSEKQFRNTYRKATKKTGIAGTLFLQALESRLDNSVYRAGFAETRRQARQLVNHGHFLVNNKKVDIPSFQLKQGDIFELTTRKDGKIRKNQQILTSLETRTPAAWLEVDKDNFKVVFNRMPERSELNQEIKESLIVEFYSK.

An S4 RNA-binding domain is found at 94–154; the sequence is SRLDNSVYRA…TRKDGKIRKN (61 aa).

This sequence belongs to the universal ribosomal protein uS4 family. Part of the 30S ribosomal subunit. Contacts protein S5. The interaction surface between S4 and S5 is involved in control of translational fidelity.

One of the primary rRNA binding proteins, it binds directly to 16S rRNA where it nucleates assembly of the body of the 30S subunit. Functionally, with S5 and S12 plays an important role in translational accuracy. The polypeptide is Small ribosomal subunit protein uS4 (Mesomycoplasma hyopneumoniae (strain 232) (Mycoplasma hyopneumoniae)).